A 295-amino-acid chain; its full sequence is MYISALLNVESTILDFWHLLKPRIMYLVVFTAIAGMVAAPGSIHPFLALISLMCIALGSGSAGAINMWYDRDIDLVMERTKNRPIPSGRVFAESALEFGITIGILSVFIMAIAVNYISAALLAVSILFYVFVYTIWLKRRTPQNIVIGGAAGAFPPMIGWAVVTDSVSWESFILFLIIFMWTPPHFWALSLNRSEDYVKASIPMFNVIHGPKKTRKHILIYSILLVLTSLLPALFLKKSLFYLSMAIIEGCVFIWFAISVIRLKNHSSQKKMFSYSISYLFSLFASIIFCSIDLF.

Transmembrane regions (helical) follow at residues Leu-27 to Leu-47, Ala-48 to Trp-68, Ser-94 to Val-114, Ile-117 to Leu-137, Asn-144 to Thr-164, Ser-171 to Leu-191, Lys-216 to Leu-236, Phe-241 to Ile-261, and Met-272 to Ile-292.

Belongs to the UbiA prenyltransferase family. Protoheme IX farnesyltransferase subfamily.

The protein localises to the cell membrane. The catalysed reaction is heme b + (2E,6E)-farnesyl diphosphate + H2O = Fe(II)-heme o + diphosphate. The protein operates within porphyrin-containing compound metabolism; heme O biosynthesis; heme O from protoheme: step 1/1. Converts heme B (protoheme IX) to heme O by substitution of the vinyl group on carbon 2 of heme B porphyrin ring with a hydroxyethyl farnesyl side group. This is Protoheme IX farnesyltransferase from Wolbachia pipientis subsp. Culex pipiens (strain wPip).